Here is a 35-residue protein sequence, read N- to C-terminus: Putative gastric cancer-related gene 224 protein (35 aa).

As to expression, expressed in gastric mucosa.

The polypeptide is Putative gastric cancer-related gene 224 protein (GCRG224) (Homo sapiens (Human)).